The chain runs to 211 residues: Transcriptional regulator GfcR (211 aa).

The protein belongs to the purine/pyrimidine phosphoribosyltransferase family. GfcR subfamily.

This chain is Transcriptional regulator GfcR, found in Methanocaldococcus jannaschii (strain ATCC 43067 / DSM 2661 / JAL-1 / JCM 10045 / NBRC 100440) (Methanococcus jannaschii).